Here is a 104-residue protein sequence, read N- to C-terminus: Photosystem II reaction center Psb28 protein (104 aa).

The protein belongs to the Psb28 family. As to quaternary structure, part of the photosystem II complex.

The protein localises to the cellular thylakoid membrane. This is Photosystem II reaction center Psb28 protein from Synechococcus sp. (strain JA-2-3B'a(2-13)) (Cyanobacteria bacterium Yellowstone B-Prime).